The chain runs to 148 residues: Lysozyme C (148 aa).

An N-terminal signal peptide occupies residues methionine 1–glycine 18. Positions lysine 19–valine 148 constitute a C-type lysozyme domain. Disulfide bonds link cysteine 24–cysteine 146, cysteine 48–cysteine 134, cysteine 83–cysteine 99, and cysteine 95–cysteine 113. Active-site residues include glutamate 53 and aspartate 71.

The protein belongs to the glycosyl hydrolase 22 family. As to quaternary structure, monomer.

It catalyses the reaction Hydrolysis of (1-&gt;4)-beta-linkages between N-acetylmuramic acid and N-acetyl-D-glucosamine residues in a peptidoglycan and between N-acetyl-D-glucosamine residues in chitodextrins.. Lysozymes have primarily a bacteriolytic function; those in tissues and body fluids are associated with the monocyte-macrophage system and enhance the activity of immunoagents. The sequence is that of Lysozyme C (LYZ) from Colobus angolensis (Angolan colobus).